We begin with the raw amino-acid sequence, 201 residues long: Holliday junction branch migration complex subunit RuvA (201 aa).

The domain I stretch occupies residues 1–63 (MYAYIKGKLS…EDAQLLYGFM (63 aa)). The interval 64–142 (SEEEKGMFLS…ITEENPETLL (79 aa)) is domain II. The tract at residues 143 to 153 (NFEGSESNQTS) is flexible linker. Residues 153–201 (SPILDEALLALEALGYSKRELNKVEKKLQAESYTSVDEAVKAGLKILVS) are domain III.

Belongs to the RuvA family. As to quaternary structure, homotetramer. Forms an RuvA(8)-RuvB(12)-Holliday junction (HJ) complex. HJ DNA is sandwiched between 2 RuvA tetramers; dsDNA enters through RuvA and exits via RuvB. An RuvB hexamer assembles on each DNA strand where it exits the tetramer. Each RuvB hexamer is contacted by two RuvA subunits (via domain III) on 2 adjacent RuvB subunits; this complex drives branch migration. In the full resolvosome a probable DNA-RuvA(4)-RuvB(12)-RuvC(2) complex forms which resolves the HJ.

Its subcellular location is the cytoplasm. The RuvA-RuvB-RuvC complex processes Holliday junction (HJ) DNA during genetic recombination and DNA repair, while the RuvA-RuvB complex plays an important role in the rescue of blocked DNA replication forks via replication fork reversal (RFR). RuvA specifically binds to HJ cruciform DNA, conferring on it an open structure. The RuvB hexamer acts as an ATP-dependent pump, pulling dsDNA into and through the RuvAB complex. HJ branch migration allows RuvC to scan DNA until it finds its consensus sequence, where it cleaves and resolves the cruciform DNA. This is Holliday junction branch migration complex subunit RuvA from Staphylococcus carnosus (strain TM300).